The primary structure comprises 357 residues: Protein pelota homolog (357 aa).

This sequence belongs to the eukaryotic release factor 1 family. Pelota subfamily. Monomer. A divalent metal cation serves as cofactor.

It is found in the cytoplasm. May function in recognizing stalled ribosomes, interact with stem-loop structures in stalled mRNA molecules, and effect endonucleolytic cleavage of the mRNA. May play a role in the release non-functional ribosomes and degradation of damaged mRNAs. Has endoribonuclease activity. This Thermococcus gammatolerans (strain DSM 15229 / JCM 11827 / EJ3) protein is Protein pelota homolog.